A 473-amino-acid polypeptide reads, in one-letter code: Glutamine synthetase (473 aa).

The 86-residue stretch at 15–100 (ENIKIIDLKF…ICSIKEPRTG (86 aa)) folds into the GS beta-grasp domain. Residues 107-473 (PRTIAAKAVE…PYEFSLYYDC (367 aa)) form the GS catalytic domain. Glutamate 132 provides a ligand contact to Mn(2+). Mg(2+) is bound at residue glutamate 134. Residue glutamate 210 coordinates ATP. Mg(2+) contacts are provided by glutamate 215 and glutamate 223. L-glutamate is bound by residues 267-268 (NG) and glycine 268. Residue histidine 272 coordinates Mg(2+). ATP-binding positions include 274 to 276 (HQS) and serine 276. Positions 324, 330, and 342 each coordinate L-glutamate. ATP contacts are provided by arginine 342, arginine 347, and lysine 356. A Mn(2+)-binding site is contributed by glutamate 361. Residue arginine 363 coordinates L-glutamate. At tyrosine 401 the chain carries O-AMP-tyrosine.

The protein belongs to the glutamine synthetase family. Oligomer of 12 subunits arranged in the form of two hexagons. It depends on Mg(2+) as a cofactor.

It is found in the cytoplasm. It carries out the reaction L-glutamate + NH4(+) + ATP = L-glutamine + ADP + phosphate + H(+). Its activity is regulated as follows. Inhibited by ADP (90%), AMP (80%), alanine (52%) and aspartate (41%). The activity of this enzyme could be controlled by adenylation under conditions of abundant glutamine. Its function is as follows. Involved in nitrogen metabolism via ammonium assimilation. Catalyzes the ATP-dependent biosynthesis of glutamine from glutamate and ammonia. This Synechocystis sp. (strain ATCC 27184 / PCC 6803 / Kazusa) protein is Glutamine synthetase.